The sequence spans 430 residues: UDP-N-acetylglucosamine 1-carboxyvinyltransferase 1 (430 aa).

22-23 (KN) contributes to the phosphoenolpyruvate binding site. Residue R93 participates in UDP-N-acetyl-alpha-D-glucosamine binding. C117 serves as the catalytic Proton donor. C117 bears the 2-(S-cysteinyl)pyruvic acid O-phosphothioketal mark. UDP-N-acetyl-alpha-D-glucosamine-binding positions include 122-126 (RPVDL), D305, and V327.

This sequence belongs to the EPSP synthase family. MurA subfamily.

Its subcellular location is the cytoplasm. It carries out the reaction phosphoenolpyruvate + UDP-N-acetyl-alpha-D-glucosamine = UDP-N-acetyl-3-O-(1-carboxyvinyl)-alpha-D-glucosamine + phosphate. Its pathway is cell wall biogenesis; peptidoglycan biosynthesis. Its function is as follows. Cell wall formation. Adds enolpyruvyl to UDP-N-acetylglucosamine. In Listeria monocytogenes serotype 4b (strain F2365), this protein is UDP-N-acetylglucosamine 1-carboxyvinyltransferase 1.